Here is a 388-residue protein sequence, read N- to C-terminus: Succinate--CoA ligase [ADP-forming] subunit beta (388 aa).

In terms of domain architecture, ATP-grasp spans 9-244; that stretch reads KQLFARYGLP…QSQEDPREAQ (236 aa). Residues Lys-46, 53–55, Glu-99, Thr-102, and Glu-107 contribute to the ATP site; that span reads GRG. Residues Asn-199 and Asp-213 each contribute to the Mg(2+) site. Substrate is bound by residues Asn-264 and 321-323; that span reads GIV.

This sequence belongs to the succinate/malate CoA ligase beta subunit family. As to quaternary structure, heterotetramer of two alpha and two beta subunits. It depends on Mg(2+) as a cofactor.

It carries out the reaction succinate + ATP + CoA = succinyl-CoA + ADP + phosphate. The enzyme catalyses GTP + succinate + CoA = succinyl-CoA + GDP + phosphate. The protein operates within carbohydrate metabolism; tricarboxylic acid cycle; succinate from succinyl-CoA (ligase route): step 1/1. Functionally, succinyl-CoA synthetase functions in the citric acid cycle (TCA), coupling the hydrolysis of succinyl-CoA to the synthesis of either ATP or GTP and thus represents the only step of substrate-level phosphorylation in the TCA. The beta subunit provides nucleotide specificity of the enzyme and binds the substrate succinate, while the binding sites for coenzyme A and phosphate are found in the alpha subunit. The protein is Succinate--CoA ligase [ADP-forming] subunit beta of Escherichia coli O8 (strain IAI1).